The chain runs to 107 residues: Iron-sulfur cluster assembly protein CyaY (107 aa).

This sequence belongs to the frataxin family.

Its function is as follows. Involved in iron-sulfur (Fe-S) cluster assembly. May act as a regulator of Fe-S biogenesis. This Neisseria meningitidis serogroup C / serotype 2a (strain ATCC 700532 / DSM 15464 / FAM18) protein is Iron-sulfur cluster assembly protein CyaY.